The sequence spans 251 residues: Protein FAM216A (251 aa).

A compositionally biased stretch (polar residues) spans 1 to 16 (MPNQGPVSDWTECSSS). The tract at residues 1–49 (MPNQGPVSDWTECSSSAEPPAVARAEGGGGGSAGHSYYQNSKDRIKDGH) is disordered.

Belongs to the FAM216 family.

This Bos taurus (Bovine) protein is Protein FAM216A (FAM216A).